Reading from the N-terminus, the 320-residue chain is Apolipoprotein E (320 aa).

The N-terminal stretch at Met1–Gly18 is a signal peptide. 8 repeat units span residues Ala82–Ser103, Pro104–Gly125, Ala126–Gly147, Gln148–Leu169, Arg170–Glu191, Arg192–Ala213, Thr214–Arg236, and Ala237–Glu258. The tract at residues Ala82–Glu199 is 8 X 22 AA approximate tandem repeats. Met145 carries the methionine sulfoxide modification. Ser149 carries the post-translational modification Phosphoserine. The segment at His160 to Arg170 is LDL and other lipoprotein receptors binding. Leu164–Arg167 lines the heparin pocket. Positions Ala212–Met293 are lipid-binding and lipoprotein association. Gly232–Met239 is a heparin binding site. Positions Gln269 to His320 are homooligomerization. Residues Arg281–Met293 form a specificity for association with VLDL region.

It belongs to the apolipoprotein A1/A4/E family. As to quaternary structure, homotetramer. May interact with ABCA1; functionally associated with ABCA1 in the biogenesis of HDLs. May interact with APP/A4 amyloid-beta peptide; the interaction is extremely stable in vitro but its physiological significance is unclear. May interact with MAPT. May interact with MAP2. In the cerebrospinal fluid, interacts with secreted SORL1. Interacts with PMEL; this allows the loading of PMEL luminal fragment on ILVs to induce fibril nucleation. APOE exists as multiple glycosylated and sialylated glycoforms within cells and in plasma. The extent of glycosylation and sialylation are tissue and context specific. In terms of processing, glycated in plasma VLDL. Post-translationally, phosphorylated by FAM20C in the extracellular medium.

The protein resides in the secreted. It localises to the extracellular space. It is found in the extracellular matrix. The protein localises to the extracellular vesicle. Its subcellular location is the endosome. The protein resides in the multivesicular body. Its function is as follows. APOE is an apolipoprotein, a protein associating with lipid particles, that mainly functions in lipoprotein-mediated lipid transport between organs via the plasma and interstitial fluids. APOE is a core component of plasma lipoproteins and is involved in their production, conversion and clearance. Apolipoproteins are amphipathic molecules that interact both with lipids of the lipoprotein particle core and the aqueous environment of the plasma. As such, APOE associates with chylomicrons, chylomicron remnants, very low density lipoproteins (VLDL) and intermediate density lipoproteins (IDL) but shows a preferential binding to high-density lipoproteins (HDL). It also binds a wide range of cellular receptors including the LDL receptor/LDLR, the LDL receptor-related proteins LRP1, LRP2 and LRP8 and the very low-density lipoprotein receptor/VLDLR that mediate the cellular uptake of the APOE-containing lipoprotein particles. Finally, APOE also has a heparin-binding activity and binds heparan-sulfate proteoglycans on the surface of cells, a property that supports the capture and the receptor-mediated uptake of APOE-containing lipoproteins by cells. A main function of APOE is to mediate lipoprotein clearance through the uptake of chylomicrons, VLDLs, and HDLs by hepatocytes. APOE is also involved in the biosynthesis by the liver of VLDLs as well as their uptake by peripheral tissues ensuring the delivery of triglycerides and energy storage in muscle, heart and adipose tissues. By participating in the lipoprotein-mediated distribution of lipids among tissues, APOE plays a critical role in plasma and tissues lipid homeostasis. APOE is also involved in two steps of reverse cholesterol transport, the HDLs-mediated transport of cholesterol from peripheral tissues to the liver, and thereby plays an important role in cholesterol homeostasis. First, it is functionally associated with ABCA1 in the biogenesis of HDLs in tissues. Second, it is enriched in circulating HDLs and mediates their uptake by hepatocytes. APOE also plays an important role in lipid transport in the central nervous system, regulating neuron survival and sprouting. The polypeptide is Apolipoprotein E (APOE) (Saimiri boliviensis boliviensis (Bolivian squirrel monkey)).